A 353-amino-acid chain; its full sequence is MTIALGKFSKDEKTLLDVLDDWLRRDRFVFIGWSGLLLFPCAYFALGGWFTGTTFVTSWYTHGLASSYLEGCNFLTAAVSTPANSLAHSLLLLWGPEAQGDFTRWCQLGGLWTFVAFHGAFGLIGFMLRQFELARSVQLRPYNAIAFSAPIAVFVSVFLIYPLGQSGWFFAPSFGVAAIFRFILFFQGFHNWTLNPFHMMGVAGVLGAALLCAIHGATVENTLFEDGDGANTFRAFNPTQAEETYSMVTANRFWSQIFGVAFSNKRWLHFFMLFVPVTGLWMSAIGVVGLALNLRAYDFVSQEIRAAEDPEFETFYTKNILLNEGIRAWMAAQDQPHENLIFPEEVLPRGNAL.

An N-acetylthreonine modification is found at Thr-2. Phosphothreonine is present on Thr-2. Residues 41–61 (CAYFALGGWFTGTTFVTSWYT) traverse the membrane as a helical segment. His-118 is a binding site for chlorophyll a. A helical transmembrane segment spans residues 125–141 (GFMLRQFELARSVQLRP). Pheophytin a contacts are provided by Gln-130 and Asn-143. A helical transmembrane segment spans residues 153–166 (VFVSVFLIYPLGQS). His-198 contacts chlorophyll a. Residues 208 to 228 (AALLCAIHGATVENTLFEDGD) form a helical membrane-spanning segment. His-215 and Phe-262 together coordinate a plastoquinone. His-215 lines the Fe cation pocket. His-269 contributes to the Fe cation binding site. A helical membrane pass occupies residues 279–295 (GLWMSAIGVVGLALNLR).

It belongs to the reaction center PufL/M/PsbA/D family. As to quaternary structure, PSII is composed of 1 copy each of membrane proteins PsbA, PsbB, PsbC, PsbD, PsbE, PsbF, PsbH, PsbI, PsbJ, PsbK, PsbL, PsbM, PsbT, PsbX, PsbY, PsbZ, Psb30/Ycf12, at least 3 peripheral proteins of the oxygen-evolving complex and a large number of cofactors. It forms dimeric complexes. The cofactor is The D1/D2 heterodimer binds P680, chlorophylls that are the primary electron donor of PSII, and subsequent electron acceptors. It shares a non-heme iron and each subunit binds pheophytin, quinone, additional chlorophylls, carotenoids and lipids. There is also a Cl(-1) ion associated with D1 and D2, which is required for oxygen evolution. The PSII complex binds additional chlorophylls, carotenoids and specific lipids..

It localises to the plastid. The protein resides in the chloroplast thylakoid membrane. The catalysed reaction is 2 a plastoquinone + 4 hnu + 2 H2O = 2 a plastoquinol + O2. Photosystem II (PSII) is a light-driven water:plastoquinone oxidoreductase that uses light energy to abstract electrons from H(2)O, generating O(2) and a proton gradient subsequently used for ATP formation. It consists of a core antenna complex that captures photons, and an electron transfer chain that converts photonic excitation into a charge separation. The D1/D2 (PsbA/PsbD) reaction center heterodimer binds P680, the primary electron donor of PSII as well as several subsequent electron acceptors. D2 is needed for assembly of a stable PSII complex. This is Photosystem II D2 protein from Welwitschia mirabilis (Tree tumbo).